Consider the following 381-residue polypeptide: D-rhamnosyltransferase WbpZ (381 aa).

Residues Glu-19, His-116, Lys-206, and Val-252 each contribute to the substrate site.

Belongs to the glycosyltransferase group 1 family. Glycosyltransferase 4 subfamily.

Its subcellular location is the cytoplasm. The enzyme catalyses GDP-alpha-D-rhamnose + N-acetyl-alpha-D-glucosaminyl-di-trans,octa-cis-undecaprenyl diphosphate = alpha-D-rhamnosyl-(1-&gt;3)-N-acetyl-alpha-D-glucosaminyl-1-diphospho-di-trans,octa-cis-undecaprenol + GDP + H(+). It carries out the reaction GDP-alpha-D-rhamnose + N-acetyl-alpha-D-galactosaminyl-di-trans,octa-cis-undecaprenyl diphosphate = alpha-D-rhamnosyl-(1-&gt;3)-N-acetyl-alpha-D-galactosaminyl-1-diphospho-di-trans,octa-cis-undecaprenol + GDP + H(+). The catalysed reaction is N-acetyl-alpha-D-glucosaminyl-di-trans,octa-cis-undecaprenyl diphosphate + GDP-alpha-D-mannose = alpha-D-mannosyl-(1-&gt;3)-N-acetyl-alpha-D-glucosaminyl-di-trans,octa-cis-undecaprenyl diphosphate + GDP + H(+). It catalyses the reaction N-acetyl-alpha-D-galactosaminyl-di-trans,octa-cis-undecaprenyl diphosphate + GDP-alpha-D-mannose = alpha-D-mannosyl-(1-&gt;3)-N-acetyl-alpha-D-galctosaminyl-1-diphospho-di-trans,octa-cis-undecaprenol + GDP + H(+). It functions in the pathway lipopolysaccharide biosynthesis; LPS oligosaccharide biosynthesis. With respect to regulation, not activated by dithiothreitol (DTT) using GlcNAc-alpha-PO(3)-PO(3)-phenylundecyl (GlcNAc-PP-PhU) as acceptor substrate. 0.25% Triton X-100 and 0.125% NP-40 increases the activity 2.5-fold and 2-fold, respectively. 0.125% octyl glucoside has little effect on activity. Slightly increased activity with Mg(2+) and Pb(2+), while no effect with Mn(2+), Co(2+), Ni(2+), Cu(2+), Zn(2+), Ca(2+) or EDTA. Not inhibited by N-butyryl-galactosamine-alpha-benzyl or N-butyryl-glucosamine-beta-benzyl. Bis-imidazolium salts having aliphatic spacer groups with 4 or 6 carbons have little effect on activity, but spacer groups of 18-22 aliphatic carbons inhibit activity, with the most potent inhibitor being bis-imidazolium salt having a 20-carbon chain spacer length. Functionally, non-processive alpha-1,3-D-rhamnosyltransferase. Catalyzes the transfer of one D-rhamnose (D-Rha) residue from donor substrate GDP-D-Rha in alpha-1-3 linkage to both GlcNAc- and GalNAc-diphosphate-lipid acceptor substrates. Is also able to transfer D-mannose (D-Man) to these acceptors at a lower level. Nucleotide sugars GDP-D-Rha, GDP-Fuc, UDP-Gal, UDP-GalNAc, UDP-GlcNAc and CMP-sialic acid cannot act as donor substrates. Only compounds with a diphosphate as the aglycone group can act as acceptor substrates. No activity is detected with compounds containing a diphosphate mimic. Fluorescent undecyl-anthracenyl group-containing compounds, such as GlcNAc-PO(3)-PO(3)-AnthrU and GalNAc-PO(3)-PO(3)-AnthrU, are also good acceptor substrates. Involved in the biosynthesis of the common polysaccharide antigen (CPA), also called A band, which is one of the two major cell surface O-antigens of the P.aeruginosa lipopolysaccharide. Involved in susceptibility to antibiotic colistin. This chain is D-rhamnosyltransferase WbpZ, found in Pseudomonas aeruginosa (strain ATCC 15692 / DSM 22644 / CIP 104116 / JCM 14847 / LMG 12228 / 1C / PRS 101 / PAO1).